Here is a 684-residue protein sequence, read N- to C-terminus: Amino-acid acetyltransferase, mitochondrial (684 aa).

Positions 414–439 are disordered; sequence PQDATNSASEPRDPSQLSTVATRRKR. The span at 415–434 shows a compositional bias: polar residues; that stretch reads QDATNSASEPRDPSQLSTVA. Residues 505 to 674 enclose the N-acetyltransferase domain; that stretch reads GKSRMTLNDP…YEGVCRGIEP (170 aa).

The protein belongs to the acetyltransferase family.

It is found in the mitochondrion. It catalyses the reaction L-glutamate + acetyl-CoA = N-acetyl-L-glutamate + CoA + H(+). Its pathway is amino-acid biosynthesis; L-arginine biosynthesis; N(2)-acetyl-L-ornithine from L-glutamate: step 1/4. Its function is as follows. N-acetylglutamate synthase involved in arginine biosynthesis. The protein is Amino-acid acetyltransferase, mitochondrial (ARG2) of Ajellomyces capsulatus (strain NAm1 / WU24) (Darling's disease fungus).